We begin with the raw amino-acid sequence, 644 residues long: Pesticidal crystal protein Cry3Aa (644 aa).

Over residues 1 to 13 the composition is skewed to basic and acidic residues; that stretch reads MNPNNRSEHDTIK. The disordered stretch occupies residues 1–20; the sequence is MNPNNRSEHDTIKTTENNEV. A propeptide spans 1 to 57 (removed in mature form); it reads MNPNNRSEHDTIKTTENNEVPTNHVQYPLAETPNPTLEDLNYKEFLRMTADNNTEAL.

The protein belongs to the delta endotoxin family.

Promotes colloidosmotic lysis by binding to the midgut epithelial cells of Coleoptera. The polypeptide is Pesticidal crystal protein Cry3Aa (cry3Aa) (Bacillus thuringiensis subsp. san diego).